Here is a 175-residue protein sequence, read N- to C-terminus: NADH-ubiquinone oxidoreductase chain 6 (175 aa).

A run of 5 helical transmembrane segments spans residues M1–S21, I26–L46, G47–F67, V87–I107, and W152–T172.

This sequence belongs to the complex I subunit 6 family.

It localises to the mitochondrion membrane. The catalysed reaction is a ubiquinone + NADH + 5 H(+)(in) = a ubiquinol + NAD(+) + 4 H(+)(out). In terms of biological role, core subunit of the mitochondrial membrane respiratory chain NADH dehydrogenase (Complex I) that is believed to belong to the minimal assembly required for catalysis. Complex I functions in the transfer of electrons from NADH to the respiratory chain. The immediate electron acceptor for the enzyme is believed to be ubiquinone. The polypeptide is NADH-ubiquinone oxidoreductase chain 6 (MT-ND6) (Dasypus novemcinctus (Nine-banded armadillo)).